The chain runs to 107 residues: ATP synthase peripheral stalk subunit F6, mitochondrial (107 aa).

Residues 1–31 (MILQRLFRFSVIRSAVSVYLRRNIGVTAVAF) constitute a mitochondrion transit peptide. N6-acetyllysine is present on residues Lys-40, Lys-45, and Lys-78. N6-acetyllysine; alternate occurs at positions 93 and 98. Residues Lys-93 and Lys-98 each carry the N6-succinyllysine; alternate modification. Lys-104 bears the N6-acetyllysine mark.

It belongs to the eukaryotic ATPase subunit F6 family. In terms of assembly, component of the ATP synthase complex composed at least of ATP5F1A/subunit alpha, ATP5F1B/subunit beta, ATP5MC1/subunit c (homooctomer), MT-ATP6/subunit a, MT-ATP8/subunit 8, ATP5ME/subunit e, ATP5MF/subunit f, ATP5MG/subunit g, ATP5MK/subunit k, ATP5MJ/subunit j, ATP5F1C/subunit gamma, ATP5F1D/subunit delta, ATP5F1E/subunit epsilon, ATP5PF/subunit F6, ATP5PB/subunit b, ATP5PD/subunit d, ATP5PO/subunit OSCP. ATP synthase complex consists of a soluble F(1) head domain (subunits alpha(3) and beta(3)) - the catalytic core - and a membrane F(0) domain - the membrane proton channel (subunits c, a, 8, e, f, g, k and j). These two domains are linked by a central stalk (subunits gamma, delta, and epsilon) rotating inside the F1 region and a stationary peripheral stalk (subunits F6, b, d, and OSCP).

It is found in the mitochondrion. Its subcellular location is the mitochondrion inner membrane. Its function is as follows. Subunit F6, of the mitochondrial membrane ATP synthase complex (F(1)F(0) ATP synthase or Complex V) that produces ATP from ADP in the presence of a proton gradient across the membrane which is generated by electron transport complexes of the respiratory chain. ATP synthase complex consist of a soluble F(1) head domain - the catalytic core - and a membrane F(1) domain - the membrane proton channel. These two domains are linked by a central stalk rotating inside the F(1) region and a stationary peripheral stalk. During catalysis, ATP synthesis in the catalytic domain of F(1) is coupled via a rotary mechanism of the central stalk subunits to proton translocation. In vivo, can only synthesize ATP although its ATP hydrolase activity can be activated artificially in vitro. Part of the complex F(0) domain. Part of the complex F(0) domain and the peripheric stalk, which acts as a stator to hold the catalytic alpha(3)beta(3) subcomplex and subunit a/ATP6 static relative to the rotary elements. The chain is ATP synthase peripheral stalk subunit F6, mitochondrial from Pongo abelii (Sumatran orangutan).